The sequence spans 582 residues: Aspartate--tRNA(Asp/Asn) ligase (582 aa).

L-aspartate is bound at residue glutamate 177. The aspartate stretch occupies residues 201–204 (QLFK). Arginine 223 is a binding site for L-aspartate. ATP is bound by residues 223-225 (RDE) and glutamine 232. Histidine 447 lines the L-aspartate pocket. Residue glutamate 481 coordinates ATP. Residue arginine 488 coordinates L-aspartate. Residue 533 to 536 (GLDR) participates in ATP binding.

Belongs to the class-II aminoacyl-tRNA synthetase family. Type 1 subfamily. In terms of assembly, homodimer.

The protein resides in the cytoplasm. The enzyme catalyses tRNA(Asx) + L-aspartate + ATP = L-aspartyl-tRNA(Asx) + AMP + diphosphate. Its function is as follows. Aspartyl-tRNA synthetase with relaxed tRNA specificity since it is able to aspartylate not only its cognate tRNA(Asp) but also tRNA(Asn). Reaction proceeds in two steps: L-aspartate is first activated by ATP to form Asp-AMP and then transferred to the acceptor end of tRNA(Asp/Asn). In Chlamydia muridarum (strain MoPn / Nigg), this protein is Aspartate--tRNA(Asp/Asn) ligase.